A 205-amino-acid chain; its full sequence is Holliday junction branch migration complex subunit RuvA (205 aa).

The tract at residues 1–64 (MIGKLKGLID…EDQIKLFGFR (64 aa)) is domain I. Residues 65–143 (TDHEREWFRL…ALSNVDPAVV (79 aa)) form a domain II region. A flexible linker region spans residues 144–154 (QLSGALDDNRA). Residues 154-205 (APRPVTDAISALVNLGYGQPQAAAAIAAAARAAGDDAATAQLIKLGLKELSK) form a domain III region.

The protein belongs to the RuvA family. As to quaternary structure, homotetramer. Forms an RuvA(8)-RuvB(12)-Holliday junction (HJ) complex. HJ DNA is sandwiched between 2 RuvA tetramers; dsDNA enters through RuvA and exits via RuvB. An RuvB hexamer assembles on each DNA strand where it exits the tetramer. Each RuvB hexamer is contacted by two RuvA subunits (via domain III) on 2 adjacent RuvB subunits; this complex drives branch migration. In the full resolvosome a probable DNA-RuvA(4)-RuvB(12)-RuvC(2) complex forms which resolves the HJ.

It localises to the cytoplasm. Functionally, the RuvA-RuvB-RuvC complex processes Holliday junction (HJ) DNA during genetic recombination and DNA repair, while the RuvA-RuvB complex plays an important role in the rescue of blocked DNA replication forks via replication fork reversal (RFR). RuvA specifically binds to HJ cruciform DNA, conferring on it an open structure. The RuvB hexamer acts as an ATP-dependent pump, pulling dsDNA into and through the RuvAB complex. HJ branch migration allows RuvC to scan DNA until it finds its consensus sequence, where it cleaves and resolves the cruciform DNA. The chain is Holliday junction branch migration complex subunit RuvA from Rhodopseudomonas palustris (strain BisB5).